We begin with the raw amino-acid sequence, 220 residues long: Aspartic protease inhibitor 5 (220 aa).

Positions 1–23 are cleaved as a signal peptide; the sequence is MMKCLFLLCLCLLPIVVFSSTFT. Residues 24–32 constitute a propeptide that is removed on maturation; that stretch reads SQNLIDLPS. Residues 26–31 carry the Vacuolar targeting signal motif; it reads NLIDLP. N-linked (GlcNAc...) asparagine glycosylation is present at Asn51. 2 disulfide bridges follow: Cys80–Cys125 and Cys174–Cys185.

The protein belongs to the protease inhibitor I3 (leguminous Kunitz-type inhibitor) family.

The protein resides in the vacuole. Its function is as follows. Inhibitor of cathepsin D (aspartic protease). May also inhibit trypsin and chymotrypsin (serine proteases). Protects the plant by inhibiting proteases of invading organisms. The chain is Aspartic protease inhibitor 5 from Solanum tuberosum (Potato).